Reading from the N-terminus, the 480-residue chain is Radical SAM Nalpha-GlyT isomerase (480 aa).

3 residues coordinate iron-sulfur cluster: Cys125, Cys129, and Cys132. The segment at 457-480 (KIVEPTPPEEDGGERKIIPITQID) is disordered.

It carries out the reaction 5-N(alpha)-glycyl-dTMP in DNA + AH2 + S-adenosyl-L-methionine = 5-C(alpha)-glycyl-dTMP in DNA + 5'-deoxyadenosine + L-methionine + A + H(+). In terms of biological role, isomerizes 5-N-alpha-glycinylthymidine (Nalpha-GlyT) into 5-Calpha-glycinylthymidine (Calpha-GlyT) as a step in the pathway leading to thymidine hypermodifications in the viral genome. As a final result of the pathway of hypermodification, 5-aminoethyl-2'-deoxyuridine (5-NedU) substitutes for about 30% of thymidines in the viral DNA. These modifications probably prevent degradation of viral genome by the host restriction-modification antiviral defense system. This is Radical SAM Nalpha-GlyT isomerase from Pseudomonas phage M6.